An 84-amino-acid chain; its full sequence is RNA-binding protein Hfq (84 aa).

One can recognise a Sm domain in the interval aspartate 10–isoleucine 69.

It belongs to the Hfq family. In terms of assembly, homohexamer.

Functionally, RNA chaperone that binds small regulatory RNA (sRNAs) and mRNAs to facilitate mRNA translational regulation in response to envelope stress, environmental stress and changes in metabolite concentrations. Also binds with high specificity to tRNAs. This is RNA-binding protein Hfq from Nitrosomonas europaea (strain ATCC 19718 / CIP 103999 / KCTC 2705 / NBRC 14298).